The primary structure comprises 702 residues: MAGARRGWRLAPVRRGVCGPRARPLMRPLWLLFAVSFFGWTGALDGSGGTTRAMDEEIVSEKQAEESHRQDSANLLIFILLLTLTILTIWLFKHRRARFLHETGLAMIYGLLVGLVLRYGIHVPSDVNNVTLSCEVQSSPTTLLVNVSGKFYEYTLKGEISSHELNNVQDNEMLRKVTFDPEVFFNILLPPIIFYAGYSLKRRHFFRNLGSILAYAFLGTAISCFVIGSIMYGCVTLMKVTGQLAGDFYFTDCLLFGAIVSATDPVTVLAIFHELQVDVELYALLFGESVLNDAVAIVLSSSIVAYQPAGDNSHTFDVTAMFKSIGIFLGIFSGSFAMGAATGVVTALVTKFTKLREFQLLETGLFFLMSWSTFLLAEAWGFTGVVAVLFCGITQAHYTYNNLSTESQHRTKQLFELLNFLAENFIFSYMGLTLFTFQNHVFNPTFVVGAFIAIFLGRAANIYPLSLLLNLGRRSKIGSNFQHMMMFAGLRGAMAFALAIRDTATYARQMMFSTTLLIVFFTVWVFGGGTTAMLSCLHIRVGVDSDQEHLGVPDNERRTTKAESAWLFRMWYNFDHNYLKPLLTHSGPPLTTTLPACCGPIARCLTSPQAYENQEQLKDDDSDLILNDGDISLTYGDSTVNTESATASAPRRFMGNSSEDALDRELTFGDHELVIRGTRLVLPMDDSEPALNSLDDTRHSPA.

12 helical membrane-spanning segments follow: residues 72–92, 104–124, 177–197, 212–232, 253–273, 279–299, 325–345, 373–393, 415–435, 437–457, 480–500, and 516–536; these read SANLLIFILLLTLTILTIWLF, GLAMIYGLLVGLVLRYGIHVP, VTFDPEVFFNILLPPIIFYAG, ILAYAFLGTAISCFVIGSIMY, CLLFGAIVSATDPVTVLAIFH, VELYALLFGESVLNDAVAIVL, IGIFLGIFSGSFAMGAATGVV, TFLLAEAWGFTGVVAVLFCGI, FELLNFLAENFIFSYMGLTLF, FQNHVFNPTFVVGAFIAIFLG, NFQHMMMFAGLRGAMAFALAI, and LLIVFFTVWVFGGGTTAMLSC.

The protein belongs to the monovalent cation:proton antiporter 1 (CPA1) transporter (TC 2.A.36) family. In terms of assembly, homodimer. Interacts with RACK1; regulates the distribution of SLC9A6 between endosomes and the plasma membrane. Post-translationally, ubiquitinated (in vitro). Glycosylated.

The protein resides in the endosome membrane. The protein localises to the recycling endosome membrane. It is found in the early endosome membrane. It localises to the late endosome membrane. Its subcellular location is the cell membrane. The catalysed reaction is Na(+)(in) + H(+)(out) = Na(+)(out) + H(+)(in). The enzyme catalyses K(+)(in) + H(+)(out) = K(+)(out) + H(+)(in). Its function is as follows. Endosomal Na(+), K(+)/H(+) antiporter. Mediates the electroneutral exchange of endosomal luminal H(+) for a cytosolic Na(+) or K(+). By facilitating proton efflux, SLC9A6 counteracts the acidity generated by vacuolar (V)-ATPase, thereby limiting luminal acidification. Responsible for alkalizing and maintaining the endosomal pH, and consequently in, e.g., endosome maturation and trafficking of recycling endosomal cargo. Plays a critical role during neurodevelopment by regulating synaptic development and plasticity. Implicated in the maintenance of cell polarity in a manner that is dependent on its ability to modulate intravesicular pH. Regulates intracelular pH in some specialized cells, osteoclasts and stereocilia where this transporter localizes to the plasma membrane. This Mus musculus (Mouse) protein is Sodium/hydrogen exchanger 6 (Slc9a6).